We begin with the raw amino-acid sequence, 160 residues long: D-aminoacyl-tRNA deacylase (160 aa).

Residues 146 to 147 carry the Gly-cisPro motif, important for rejection of L-amino acids motif; it reads GP.

Belongs to the DTD family. Homodimer.

Its subcellular location is the cytoplasm. It carries out the reaction glycyl-tRNA(Ala) + H2O = tRNA(Ala) + glycine + H(+). The enzyme catalyses a D-aminoacyl-tRNA + H2O = a tRNA + a D-alpha-amino acid + H(+). Its function is as follows. An aminoacyl-tRNA editing enzyme that deacylates mischarged D-aminoacyl-tRNAs. Also deacylates mischarged glycyl-tRNA(Ala), protecting cells against glycine mischarging by AlaRS. Acts via tRNA-based rather than protein-based catalysis; rejects L-amino acids rather than detecting D-amino acids in the active site. By recycling D-aminoacyl-tRNA to D-amino acids and free tRNA molecules, this enzyme counteracts the toxicity associated with the formation of D-aminoacyl-tRNA entities in vivo and helps enforce protein L-homochirality. The protein is D-aminoacyl-tRNA deacylase of Desulfovibrio desulfuricans (strain ATCC 27774 / DSM 6949 / MB).